The chain runs to 326 residues: GTP 3',8-cyclase (326 aa).

The Radical SAM core domain maps to 4–227; the sequence is KHERNINYMR…LTPQKNILGN (224 aa). Residue R13 participates in GTP binding. Residues C20 and C24 each coordinate [4Fe-4S] cluster. Position 26 (Y26) interacts with S-adenosyl-L-methionine. Residue C27 coordinates [4Fe-4S] cluster. R63 is a binding site for GTP. An S-adenosyl-L-methionine-binding site is contributed by G67. GTP is bound at residue T94. S118 contributes to the S-adenosyl-L-methionine binding site. K155 lines the GTP pocket. Residue M189 participates in S-adenosyl-L-methionine binding. Positions 253 and 256 each coordinate [4Fe-4S] cluster. 258 to 260 lines the GTP pocket; the sequence is RIR. C270 is a [4Fe-4S] cluster binding site.

The protein belongs to the radical SAM superfamily. MoaA family. Monomer and homodimer. [4Fe-4S] cluster serves as cofactor.

The catalysed reaction is GTP + AH2 + S-adenosyl-L-methionine = (8S)-3',8-cyclo-7,8-dihydroguanosine 5'-triphosphate + 5'-deoxyadenosine + L-methionine + A + H(+). Its pathway is cofactor biosynthesis; molybdopterin biosynthesis. Catalyzes the cyclization of GTP to (8S)-3',8-cyclo-7,8-dihydroguanosine 5'-triphosphate. This Syntrophomonas wolfei subsp. wolfei (strain DSM 2245B / Goettingen) protein is GTP 3',8-cyclase.